The sequence spans 96 residues: Complement inhibitor RaCI4 (96 aa).

The N-terminal stretch at 1 to 24 (MSAFNIFALVVVVCALMINECCTS) is a signal peptide. 3 cysteine pairs are disulfide-bonded: Cys37–Cys61, Cys42–Cys63, and Cys57–Cys78.

Belongs to the RaCI family. Expressed in salivary glands.

The protein resides in the secreted. Functionally, complement inhibitor. Prevents complement-mediated C5 activation by binding to C5. Binds C5 at a different binding site than the other tick complement inhibitors OmCI and CirpT1, and the drug eculizumab. Inhibits complement in human and guinea pig but not in other species tested (rabbit, rat, mouse, and pig). This Hyalomma rufipes (Tick) protein is Complement inhibitor RaCI4.